The sequence spans 225 residues: Uracil-DNA glycosylase (225 aa).

Catalysis depends on Asp-65, which acts as the Proton acceptor.

The protein belongs to the uracil-DNA glycosylase (UDG) superfamily. UNG family.

Its subcellular location is the cytoplasm. It carries out the reaction Hydrolyzes single-stranded DNA or mismatched double-stranded DNA and polynucleotides, releasing free uracil.. Its function is as follows. Excises uracil residues from the DNA which can arise as a result of misincorporation of dUMP residues by DNA polymerase or due to deamination of cytosine. This chain is Uracil-DNA glycosylase, found in Bacillus cereus (strain ZK / E33L).